The primary structure comprises 638 residues: Chaperone protein DnaK (638 aa).

Threonine 198 is subject to Phosphothreonine; by autocatalysis. Disordered regions lie at residues 539 to 559 (DGLA…LASD) and 602 to 638 (QAKA…DDKK). Over residues 611–623 (GQAHDAGQEKPAD) the composition is skewed to basic and acidic residues. The segment covering 624–638 (DVVDAEFEEVKDDKK) has biased composition (acidic residues).

Belongs to the heat shock protein 70 family.

In terms of biological role, acts as a chaperone. This is Chaperone protein DnaK from Shewanella frigidimarina (strain NCIMB 400).